A 259-amino-acid chain; its full sequence is Eukaryotic translation initiation factor 4E1 (259 aa).

Residues methionine 1–aspartate 70 form a disordered region. Polar residues predominate over residues phenylalanine 18 to glutamine 27. Residues glutamate 41–proline 51 show a composition bias toward basic and acidic residues. A compositionally biased stretch (low complexity) spans threonine 54 to aspartate 70. MRNA contacts are provided by residues tryptophan 100 to glutamate 101, tryptophan 146 to glutamate 147, and arginine 199 to lysine 204.

This sequence belongs to the eukaryotic initiation factor 4E family. In terms of assembly, eIF4F is a multi-subunit complex, the composition of which varies with external and internal environmental conditions. It is composed of at least eIF4A, eIF4E1 and eIF4G1. Recruited by cup in oocytes and in early embryos, preventing the interaction with eIF4G. The interaction with cup therefore prevents the translation of key transcripts such as oskar (osk) and nanos (nos) in some regions in the early embryo. Interacts with mxt. Interacts with 4E-T and Thor. Forms a RNP containing at least me31B, eIF4E1, cup, tral and pAbp; this interaction is required for the translational silencing of maternal mRNAs during the maternal-to-zygotic transition. Post-translationally, phosphorylation increases the ability of the protein to bind to mRNA caps and to form the eIF4F complex. Expressed at the posterior end of developing oocytes (at protein level). Preferential expression in the pole cells, at different developmental stages.

It localises to the cytoplasm. The protein resides in the cytoplasmic ribonucleoprotein granule. The protein localises to the nucleus. Its subcellular location is the nuclear body. Its function is as follows. Recognizes and binds the 7-methylguanosine (m7G)-containing mRNA cap during an early step in the initiation of protein synthesis and facilitates ribosome binding by inducing the unwinding of the mRNAs secondary structures. In 0-1 hour embryos, forms a complex with me31B, cup, tral and pAbp which binds to various mRNAs including maternal mRNAs, and down-regulates their expression during the maternal-to-zygotic transition. The chain is Eukaryotic translation initiation factor 4E1 from Drosophila melanogaster (Fruit fly).